The following is a 384-amino-acid chain: Monomeric sarcosine oxidase (384 aa).

6–36 contributes to the FAD binding site; sequence DVIVIGLGGMGSAAAHHLSARGARVLGLEKF. Cys315 is subject to S-8alpha-FAD cysteine.

It belongs to the MSOX/MTOX family. MSOX subfamily. Monomer. FAD serves as cofactor.

Its subcellular location is the cytoplasm. It carries out the reaction sarcosine + O2 + H2O = formaldehyde + glycine + H2O2. Catalyzes the oxidative demethylation of sarcosine. The sequence is that of Monomeric sarcosine oxidase from Streptomyces avermitilis (strain ATCC 31267 / DSM 46492 / JCM 5070 / NBRC 14893 / NCIMB 12804 / NRRL 8165 / MA-4680).